Here is a 242-residue protein sequence, read N- to C-terminus: Ribose-5-phosphate isomerase A (242 aa).

Substrate-binding positions include 39–42 (SGST), 95–98 (DGAD), and 108–111 (KGGG). Catalysis depends on E117, which acts as the Proton acceptor. Substrate is bound at residue K135.

Belongs to the ribose 5-phosphate isomerase family. In terms of assembly, homodimer.

It carries out the reaction aldehydo-D-ribose 5-phosphate = D-ribulose 5-phosphate. It functions in the pathway carbohydrate degradation; pentose phosphate pathway; D-ribose 5-phosphate from D-ribulose 5-phosphate (non-oxidative stage): step 1/1. In terms of biological role, catalyzes the reversible conversion of ribose-5-phosphate to ribulose 5-phosphate. This is Ribose-5-phosphate isomerase A from Chlamydia trachomatis serovar D (strain ATCC VR-885 / DSM 19411 / UW-3/Cx).